The primary structure comprises 438 residues: Glutamate-1-semialdehyde 2,1-aminomutase (438 aa).

Position 274 is an N6-(pyridoxal phosphate)lysine (Lys274).

This sequence belongs to the class-III pyridoxal-phosphate-dependent aminotransferase family. HemL subfamily. As to quaternary structure, homodimer. Pyridoxal 5'-phosphate is required as a cofactor.

It is found in the cytoplasm. The catalysed reaction is (S)-4-amino-5-oxopentanoate = 5-aminolevulinate. It participates in porphyrin-containing compound metabolism; protoporphyrin-IX biosynthesis; 5-aminolevulinate from L-glutamyl-tRNA(Glu): step 2/2. The polypeptide is Glutamate-1-semialdehyde 2,1-aminomutase (Salinibacter ruber (strain DSM 13855 / M31)).